The sequence spans 236 residues: MATPHINAVEGAFAETMLFPGDPLRAKYIAETFLENVEQVTDVRNMLGFTGTYKGKRISVMGSGMGIPSCSIYATELIRDYGVKNLIRVGTCGAISTDVKVRDVIIGMGACTDSAVNRLRFKGQDFAAIANYELMNAVIESAKVRGTKIRVGNIFSADLFYTPDPQMFDVMEKMGVLGVEMEAAGLYGVAHEFGARALCVVTVSDHIRTGEKTSAEERQTTFNDMIIMTLEAAITL.

His5 provides a ligand contact to a purine D-ribonucleoside. Phosphate contacts are provided by residues Gly21, Arg25, Arg44, and 88-91 (RVGT). Residues 180–182 (EME) and 204–205 (SD) contribute to the a purine D-ribonucleoside site. Catalysis depends on Asp205, which acts as the Proton donor.

Belongs to the PNP/UDP phosphorylase family. As to quaternary structure, homohexamer; trimer of homodimers.

It carries out the reaction a purine D-ribonucleoside + phosphate = a purine nucleobase + alpha-D-ribose 1-phosphate. The catalysed reaction is a purine 2'-deoxy-D-ribonucleoside + phosphate = a purine nucleobase + 2-deoxy-alpha-D-ribose 1-phosphate. Catalyzes the reversible phosphorolytic breakdown of the N-glycosidic bond in the beta-(deoxy)ribonucleoside molecules, with the formation of the corresponding free purine bases and pentose-1-phosphate. The polypeptide is Purine nucleoside phosphorylase DeoD-type (Shewanella baltica (strain OS223)).